Consider the following 429-residue polypeptide: Glutamate-1-semialdehyde 2,1-aminomutase 2 (429 aa).

Lys268 carries the post-translational modification N6-(pyridoxal phosphate)lysine.

Belongs to the class-III pyridoxal-phosphate-dependent aminotransferase family. HemL subfamily. Homodimer. It depends on pyridoxal 5'-phosphate as a cofactor.

It localises to the cytoplasm. It carries out the reaction (S)-4-amino-5-oxopentanoate = 5-aminolevulinate. Its pathway is porphyrin-containing compound metabolism; protoporphyrin-IX biosynthesis; 5-aminolevulinate from L-glutamyl-tRNA(Glu): step 2/2. The polypeptide is Glutamate-1-semialdehyde 2,1-aminomutase 2 (Geobacillus thermodenitrificans (strain NG80-2)).